The primary structure comprises 470 residues: Poly(A) polymerase catalytic subunit (470 aa).

Residues D192 and D194 contribute to the active site.

This sequence belongs to the poxviridae poly(A) polymerase catalytic subunit family. Heterodimer of a large (catalytic) subunit and a small (regulatory) subunit.

It carries out the reaction RNA(n) + ATP = RNA(n)-3'-adenine ribonucleotide + diphosphate. In terms of biological role, polymerase that creates the 3'-poly(A) tail of mRNA's. This is Poly(A) polymerase catalytic subunit (PAPL) from Erythrocebus patas (Red guenon).